A 457-amino-acid chain; its full sequence is Argininosuccinate lyase (457 aa).

It belongs to the lyase 1 family. Argininosuccinate lyase subfamily.

The protein resides in the cytoplasm. The enzyme catalyses 2-(N(omega)-L-arginino)succinate = fumarate + L-arginine. The protein operates within amino-acid biosynthesis; L-arginine biosynthesis; L-arginine from L-ornithine and carbamoyl phosphate: step 3/3. The sequence is that of Argininosuccinate lyase from Escherichia coli O157:H7.